A 637-amino-acid polypeptide reads, in one-letter code: MWKFTSSATKRIGNSLSSNNNNGSLLFSLNFNGSNNNNNNESSKPITAANTQNNSTTKSIDNNNNNTNNSNSNNNNNDNIKNNNKFNRASHRSNITLVAINNKDISQMTNLLADSGISVSKISNKKISLASKINTLNKLNSSLLHLNSINNSLTNSNNNNDNNNLIDNNNNDNYNNDSISSSSSSSSLSESSQTLSSASSSASSSSSSTLSSSSSVSSKSLNNNNNNNNSRFNNEFNDVRVLGKGGFGIVFQCCNIFDQMEYAVKRIKVNQKIPTKELMEVRAMARLNHPNIVRYYGSWIEEEIITNNSIDHYGENDNNLFENIDSFPSSSYSSVSAAASSSSLVSNSSNSYSNNKATYISNSSSSSSSSSSCSYSIGNGNLSISECTNDDNNNYNQLKQKKFSLYIQMELCKYSTLRNLINEINNIKSITSIQSTSSIANPIGTNILISLDIKQCREITRQILVALKYIHSQGFVHRDITPDNVFVCQSPFGIKIGDFGLATTIESLTVDSNNNNNNNINNNNNNNKKVGGLGTYLYSSNEQEQGDNYNQKTDLYSVGVIFFEMLSQFKTTMERSTTLSKLKKSLSVLKTNPNLKQKYPNDTDFIDHLIQSFATRPFSNQISTDYDNFPPKNFLIN.

Disordered regions lie at residues 36–88 and 155–234; these read NNNN…KFNR and NSNN…RFNN. The segment covering 53-85 has biased composition (low complexity); sequence NNSTTKSIDNNNNNTNNSNSNNNNNDNIKNNNK. The region spanning 236 to 629 is the Protein kinase domain; sequence FNDVRVLGKG…NQISTDYDNF (394 aa). ATP-binding positions include 242–250 and Lys-265; that span reads LGKGGFGIV. Catalysis depends on Asp-479, which acts as the Proton acceptor.

It belongs to the protein kinase superfamily. Ser/Thr protein kinase family. GCN2 subfamily.

It carries out the reaction L-seryl-[protein] + ATP = O-phospho-L-seryl-[protein] + ADP + H(+). The catalysed reaction is L-threonyl-[protein] + ATP = O-phospho-L-threonyl-[protein] + ADP + H(+). The chain is Probable serine/threonine-protein kinase DDB_G0283065 from Dictyostelium discoideum (Social amoeba).